A 321-amino-acid chain; its full sequence is Transaldolase (321 aa).

Lysine 132 (schiff-base intermediate with substrate) is an active-site residue.

Belongs to the transaldolase family. Type 1 subfamily. As to quaternary structure, homodimer.

Its subcellular location is the cytoplasm. The catalysed reaction is D-sedoheptulose 7-phosphate + D-glyceraldehyde 3-phosphate = D-erythrose 4-phosphate + beta-D-fructose 6-phosphate. It functions in the pathway carbohydrate degradation; pentose phosphate pathway; D-glyceraldehyde 3-phosphate and beta-D-fructose 6-phosphate from D-ribose 5-phosphate and D-xylulose 5-phosphate (non-oxidative stage): step 2/3. Functionally, transaldolase is important for the balance of metabolites in the pentose-phosphate pathway. The sequence is that of Transaldolase from Rhizobium etli (strain ATCC 51251 / DSM 11541 / JCM 21823 / NBRC 15573 / CFN 42).